A 414-amino-acid chain; its full sequence is Putative cytochrome P450 126 (414 aa).

Cysteine 363 lines the heme pocket.

It belongs to the cytochrome P450 family. It depends on heme as a cofactor.

The sequence is that of Putative cytochrome P450 126 (cyp126) from Mycobacterium tuberculosis (strain CDC 1551 / Oshkosh).